A 231-amino-acid polypeptide reads, in one-letter code: Ribosyldihydronicotinamide dehydrogenase [quinone] (231 aa).

Residues His12, 18-21, and 104-107 contribute to the FAD site; these read FNGS and LYWF. A substrate-binding site is contributed by 127-129; sequence FDI. FAD is bound by residues 148-151 and Tyr156; that span reads TTGG. Positions 174 and 178 each coordinate Zn(2+). An FAD-binding site is contributed by Asp194. Ser197 carries the post-translational modification Phosphoserine. Arg201 contributes to the FAD binding site. Cys223 contributes to the Zn(2+) binding site.

The protein belongs to the NAD(P)H dehydrogenase (quinone) family. In terms of assembly, homodimer. Zn(2+) is required as a cofactor. It depends on FAD as a cofactor.

The protein resides in the cytoplasm. The catalysed reaction is 1-(beta-D-ribofuranosyl)-1,4-dihydronicotinamide + a quinone + H(+) = beta-nicotinamide D-riboside + a quinol. Functionally, the enzyme apparently serves as a quinone reductase in connection with conjugation reactions of hydroquinones involved in detoxification pathways as well as in biosynthetic processes such as the vitamin K-dependent gamma-carboxylation of glutamate residues in prothrombin synthesis. In Mus musculus (Mouse), this protein is Ribosyldihydronicotinamide dehydrogenase [quinone] (Nqo2).